The primary structure comprises 130 residues: Small ribosomal subunit protein uS9 (130 aa).

Belongs to the universal ribosomal protein uS9 family.

The polypeptide is Small ribosomal subunit protein uS9 (Saccharophagus degradans (strain 2-40 / ATCC 43961 / DSM 17024)).